The chain runs to 338 residues: Phenylalanine--tRNA ligase alpha subunit (338 aa).

E252 provides a ligand contact to Mg(2+).

The protein belongs to the class-II aminoacyl-tRNA synthetase family. Phe-tRNA synthetase alpha subunit type 1 subfamily. In terms of assembly, tetramer of two alpha and two beta subunits. Requires Mg(2+) as cofactor.

Its subcellular location is the cytoplasm. It catalyses the reaction tRNA(Phe) + L-phenylalanine + ATP = L-phenylalanyl-tRNA(Phe) + AMP + diphosphate + H(+). In Pseudomonas aeruginosa (strain ATCC 15692 / DSM 22644 / CIP 104116 / JCM 14847 / LMG 12228 / 1C / PRS 101 / PAO1), this protein is Phenylalanine--tRNA ligase alpha subunit.